A 274-amino-acid chain; its full sequence is Ribosome biogenesis protein UTP30 (274 aa).

Belongs to the universal ribosomal protein uL1 family. Highly divergent. In terms of assembly, component of the 90S pre-ribosomes. Interacts with FAF1.

The protein resides in the nucleus. It is found in the nucleolus. Functionally, involved in rRNA-processing and ribosome biosynthesis. The polypeptide is Ribosome biogenesis protein UTP30 (UTP30) (Saccharomyces cerevisiae (strain ATCC 204508 / S288c) (Baker's yeast)).